The primary structure comprises 154 residues: Transcriptional repressor NrdR (154 aa).

The tract at residues 1 to 22 (MRCPFCGNDDTQVKDSRPTEDN) is disordered. Residues 3–34 (CPFCGNDDTQVKDSRPTEDNSAIRRRRFCPAC) fold into a zinc finger. Positions 11-22 (TQVKDSRPTEDN) are enriched in basic and acidic residues. The 91-residue stretch at 49–139 (LTVVKSGGSR…VYKDFREVTD (91 aa)) folds into the ATP-cone domain.

It belongs to the NrdR family. The cofactor is Zn(2+).

In terms of biological role, negatively regulates transcription of bacterial ribonucleotide reductase nrd genes and operons by binding to NrdR-boxes. This is Transcriptional repressor NrdR from Rhodospirillum centenum (strain ATCC 51521 / SW).